We begin with the raw amino-acid sequence, 179 residues long: MSSRILTSDVIGIDVLLHDHHAVLAKSTGGAVAVFANNAPAFYAVTPARMAELLALEEKLSRPGSDVALDAQFYEEPEAAPVAIPCGKFAMYPAWQPDADFQRQAALWGVALREPVTAEELAAFIAYWQAEGKVFHHIQWQQKLARSVQISRSSNGGMPQRDINSVSEPDNHIPPGFRG.

Positions 151–168 (SRSSNGGMPQRDINSVSE) are enriched in polar residues. Residues 151-179 (SRSSNGGMPQRDINSVSEPDNHIPPGFRG) form a disordered region.

Belongs to the DnaT family. In terms of assembly, homooligomerizes. Interacts with PriB. Component of the replication restart primosome. Primosome assembly occurs via a 'hand-off' mechanism. PriA binds to replication forks, subsequently PriB then DnaT bind; DnaT then displaces ssDNA to generate the helicase loading substrate.

Its function is as follows. Involved in the restart of stalled replication forks, which reloads the replicative helicase on sites other than the origin of replication. Can function in multiple replication restart pathways. Displaces ssDNA from a PriB-ssDNA complex. Probably forms a spiral filament on ssDNA. This is Replication restart protein DnaT from Salmonella heidelberg (strain SL476).